We begin with the raw amino-acid sequence, 334 residues long: Putative carboxypeptidase VC_A0337 (334 aa).

The active-site Nucleophile is Ser112. Residues Glu234 and His302 each act as charge relay system in the active site.

The protein belongs to the peptidase S66 family.

The sequence is that of Putative carboxypeptidase VC_A0337 from Vibrio cholerae serotype O1 (strain ATCC 39315 / El Tor Inaba N16961).